We begin with the raw amino-acid sequence, 357 residues long: Aurora kinase A- and ninein-interacting protein (357 aa).

The segment covering 72–93 has biased composition (polar residues); the sequence is TSQQGKTNGADQRSVSSHTESQ. The disordered stretch occupies residues 72–102; it reads TSQQGKTNGADQRSVSSHTESQTNKESKEDA. The interval 189–357 is interaction with AURKA; sequence QKEGEDSSCE…EGNQVIRHQA (169 aa). The tract at residues 281-357 is interaction with RBBP8/CtIP; the sequence is KDSWSQLFTE…EGNQVIRHQA (77 aa). Ser292 bears the Phosphoserine mark.

Belongs to the AUNIP family. In terms of assembly, interacts (via C-terminus) with AURKA (via C-terminus). Interacts (via N-terminus) with NIN; this interaction blocks NIN phosphorylation by both AURKA and GSK3B. Identified in a complex with NIN and AURKA. Interacts with RBBP8/CtIP.

It localises to the nucleus. Its subcellular location is the chromosome. The protein localises to the cytoplasm. It is found in the cytoskeleton. The protein resides in the microtubule organizing center. It localises to the centrosome. Its subcellular location is the spindle pole. Functionally, DNA-binding protein that accumulates at DNA double-strand breaks (DSBs) following DNA damage and promotes DNA resection and homologous recombination. Serves as a sensor of DNA damage: binds DNA with a strong preference for DNA substrates that mimic structures generated at stalled replication forks, and anchors RBBP8/CtIP to DSB sites to promote DNA end resection and ensuing homologous recombination repair. Inhibits non-homologous end joining (NHEJ). Required for the dynamic movement of AURKA at the centrosomes and spindle apparatus during the cell cycle. The chain is Aurora kinase A- and ninein-interacting protein from Bos taurus (Bovine).